We begin with the raw amino-acid sequence, 946 residues long: Ent-kaur-16-ene synthase (946 aa).

6 residues coordinate Mg(2+): Asp-656, Glu-660, Asn-839, Asp-840, Ser-843, and Asp-847. The DEXXE motif signature appears at 656-660 (DEFFE).

The protein belongs to the terpene synthase family. Mg(2+) serves as cofactor.

The catalysed reaction is ent-copalyl diphosphate = ent-kaur-16-ene + diphosphate. It catalyses the reaction (2E,6E,10E)-geranylgeranyl diphosphate = ent-copalyl diphosphate. Its pathway is plant hormone biosynthesis; gibberellin biosynthesis. Catalyzes the conversion of geranylgeranyl diphosphate to the gibberellin precursor ent-kaurene diphosphate in a two step process. The sequence is that of Ent-kaur-16-ene synthase from Phaeosphaeria sp. (strain L487).